A 210-amino-acid chain; its full sequence is Methylthioribulose-1-phosphate dehydratase (210 aa).

Zn(2+)-binding residues include histidine 97 and histidine 99.

Belongs to the aldolase class II family. MtnB subfamily. As to quaternary structure, homotetramer. Zn(2+) is required as a cofactor.

It carries out the reaction 5-(methylsulfanyl)-D-ribulose 1-phosphate = 5-methylsulfanyl-2,3-dioxopentyl phosphate + H2O. Its pathway is amino-acid biosynthesis; L-methionine biosynthesis via salvage pathway; L-methionine from S-methyl-5-thio-alpha-D-ribose 1-phosphate: step 2/6. Functionally, catalyzes the dehydration of methylthioribulose-1-phosphate (MTRu-1-P) into 2,3-diketo-5-methylthiopentyl-1-phosphate (DK-MTP-1-P). The chain is Methylthioribulose-1-phosphate dehydratase from Geobacillus kaustophilus (strain HTA426).